The chain runs to 590 residues: MGSIEQTTEILLCLSPVEVASLKEGINFFRNKSTGKDYILYKNKSRLRACKNMCKHQGGLFIKDIEDLAGRSVRCTKHNWKLDVSTMKYINPPESFCQDELVVEMDENNRLLLLELNPPNPWDLQPRSPEELAFGEVQITYLTHACMDLKLGDKRMVFDPWLIGPAFARGWWLLHEPPSDWLERLCQADLIYISHLHSDHLSYPTLKKLAGRRPDIPIYVGNTERPVFWNLNQSGVQLTNINVVPFGIWQQVDKNLRFMILMDGVHPEMDTCIIVEYKGHKILNTVDCTRPNGGRLPMKVALMMSDFAGGASGFPMTFSGGKFTEEWKAQFIKTERKKLLNYKARLVKNLQPRIYCPFAGYFVESHPSDKYIKETNTKNDPNELNNLIKKNSDVITWTPRPGATLDLGRMLKDPTDSKGIIEPPEGTKIYKDSWDFEPYLEILNAAVGDEIFLHSSWIKEYFTWAGFKDYNLVVRMIETDEDFNPFPGGYDYLVDFLDLSFPKERPQREHPYEEIHSRVDVIRHVVKNGLLWDELYIGFQTRLQRDPDIYHHLFWNHFQIKLPLTPPNWKSFLMCCEQNGPGILQECKTT.

The Rieske domain occupies 14-112; sequence LSPVEVASLK…VEMDENNRLL (99 aa). The [2Fe-2S] cluster site is built by cysteine 54, histidine 56, cysteine 75, and histidine 78.

The protein belongs to the CMP-Neu5Ac hydroxylase family. [2Fe-2S] cluster is required as a cofactor.

The protein resides in the cytoplasm. It catalyses the reaction CMP-N-acetyl-beta-neuraminate + 2 Fe(II)-[cytochrome b5] + O2 + 2 H(+) = CMP-N-glycoloyl-beta-neuraminate + 2 Fe(III)-[cytochrome b5] + H2O. Its pathway is amino-sugar metabolism; N-acetylneuraminate metabolism. Sialic acids are components of carbohydrate chains of glycoconjugates and are involved in cell-cell recognition and cell-pathogen interactions. Catalyzes the conversion of CMP-N-acetylneuraminic acid (CMP-Neu5Ac) into its hydroxylated derivative CMP-N-glycolylneuraminic acid (CMP-Neu5Gc), a sialic acid abundantly expressed at the surface of many cells. This chain is Cytidine monophosphate-N-acetylneuraminic acid hydroxylase, found in Pan troglodytes (Chimpanzee).